We begin with the raw amino-acid sequence, 310 residues long: Homoserine O-acetyltransferase (310 aa).

Cys142 (acyl-thioester intermediate) is an active-site residue. Positions 163 and 192 each coordinate substrate. Catalysis depends on His235, which acts as the Proton acceptor. Glu237 is an active-site residue. Arg249 provides a ligand contact to substrate.

It belongs to the MetA family.

It is found in the cytoplasm. The enzyme catalyses L-homoserine + acetyl-CoA = O-acetyl-L-homoserine + CoA. Its pathway is amino-acid biosynthesis; L-methionine biosynthesis via de novo pathway; O-acetyl-L-homoserine from L-homoserine: step 1/1. In terms of biological role, transfers an acetyl group from acetyl-CoA to L-homoserine, forming acetyl-L-homoserine. The polypeptide is Homoserine O-acetyltransferase (Parabacteroides distasonis (strain ATCC 8503 / DSM 20701 / CIP 104284 / JCM 5825 / NCTC 11152)).